The following is a 95-amino-acid chain: Aspartyl/glutamyl-tRNA(Asn/Gln) amidotransferase subunit C (95 aa).

The protein belongs to the GatC family. Heterotrimer of A, B and C subunits.

It catalyses the reaction L-glutamyl-tRNA(Gln) + L-glutamine + ATP + H2O = L-glutaminyl-tRNA(Gln) + L-glutamate + ADP + phosphate + H(+). The enzyme catalyses L-aspartyl-tRNA(Asn) + L-glutamine + ATP + H2O = L-asparaginyl-tRNA(Asn) + L-glutamate + ADP + phosphate + 2 H(+). In terms of biological role, allows the formation of correctly charged Asn-tRNA(Asn) or Gln-tRNA(Gln) through the transamidation of misacylated Asp-tRNA(Asn) or Glu-tRNA(Gln) in organisms which lack either or both of asparaginyl-tRNA or glutaminyl-tRNA synthetases. The reaction takes place in the presence of glutamine and ATP through an activated phospho-Asp-tRNA(Asn) or phospho-Glu-tRNA(Gln). This is Aspartyl/glutamyl-tRNA(Asn/Gln) amidotransferase subunit C from Desulfosudis oleivorans (strain DSM 6200 / JCM 39069 / Hxd3) (Desulfococcus oleovorans).